The following is a 216-amino-acid chain: Capsule polysaccharide export ATP-binding protein CtrD (216 aa).

The ABC transporter domain maps to 2-215; it reads ISVEHVSKRY…DKAYEYYNSL (214 aa). 38–45 lines the ATP pocket; it reads GRNGAGKS.

Belongs to the ABC transporter superfamily.

It is found in the cell inner membrane. The enzyme catalyses ATP + H2O + capsular polysaccharide-[capsular polysaccharide-binding protein]Side 1 = ADP + phosphate + capsular polysaccharideSide 2 + [capsular polysaccharide-binding protein]Side 1.. In terms of biological role, putative ATP-binding protein, and an energy-coupling component of capsule polysaccharide export apparatus. This Neisseria meningitidis serogroup B (strain ATCC BAA-335 / MC58) protein is Capsule polysaccharide export ATP-binding protein CtrD (ctrD).